A 237-amino-acid chain; its full sequence is Lipoprotein-releasing system ATP-binding protein LolD (237 aa).

Positions 8-236 (ISVTDLRKTF…EAIKKSVKTA (229 aa)) constitute an ABC transporter domain. 40-47 (GKSGSGKS) serves as a coordination point for ATP.

This sequence belongs to the ABC transporter superfamily. Lipoprotein translocase (TC 3.A.1.125) family. In terms of assembly, the complex is composed of two ATP-binding proteins (LolD) and two transmembrane proteins (LolC and LolE).

The protein localises to the cell inner membrane. Its function is as follows. Part of the ABC transporter complex LolCDE involved in the translocation of mature outer membrane-directed lipoproteins, from the inner membrane to the periplasmic chaperone, LolA. Responsible for the formation of the LolA-lipoprotein complex in an ATP-dependent manner. The protein is Lipoprotein-releasing system ATP-binding protein LolD of Leptospira interrogans serogroup Icterohaemorrhagiae serovar Lai (strain 56601).